A 195-amino-acid chain; its full sequence is Imidazoleglycerol-phosphate dehydratase (195 aa).

It belongs to the imidazoleglycerol-phosphate dehydratase family.

The protein localises to the cytoplasm. The catalysed reaction is D-erythro-1-(imidazol-4-yl)glycerol 3-phosphate = 3-(imidazol-4-yl)-2-oxopropyl phosphate + H2O. The protein operates within amino-acid biosynthesis; L-histidine biosynthesis; L-histidine from 5-phospho-alpha-D-ribose 1-diphosphate: step 6/9. This Maridesulfovibrio salexigens (strain ATCC 14822 / DSM 2638 / NCIMB 8403 / VKM B-1763) (Desulfovibrio salexigens) protein is Imidazoleglycerol-phosphate dehydratase.